We begin with the raw amino-acid sequence, 712 residues long: Polyribonucleotide nucleotidyltransferase (712 aa).

2 residues coordinate Mg(2+): aspartate 487 and aspartate 493. Residues 554 to 613 enclose the KH domain; sequence PKIITMTINPDKIRDVIGPSGKQINKIIEETGVKIDIEQDGTVFISSINQEMNDKAKKII. Residues 623–691 enclose the S1 motif domain; that stretch reads GEIYEGKVKR…KQGRVNLSRK (69 aa).

This sequence belongs to the polyribonucleotide nucleotidyltransferase family. Mg(2+) serves as cofactor.

The protein resides in the cytoplasm. The catalysed reaction is RNA(n+1) + phosphate = RNA(n) + a ribonucleoside 5'-diphosphate. Involved in mRNA degradation. Catalyzes the phosphorolysis of single-stranded polyribonucleotides processively in the 3'- to 5'-direction. This Bacillus anthracis (strain CDC 684 / NRRL 3495) protein is Polyribonucleotide nucleotidyltransferase.